A 458-amino-acid chain; its full sequence is Purple acid phosphatase 23 (458 aa).

The N-terminal stretch at 1-19 (MTLLIMITLTSISLLLAAA) is a signal peptide. N-linked (GlcNAc...) asparagine glycans are attached at residues asparagine 59, asparagine 121, and asparagine 136. A Fe cation-binding site is contributed by aspartate 194. N-linked (GlcNAc...) asparagine glycosylation is present at asparagine 200. Residues aspartate 221 and tyrosine 224 each contribute to the Fe cation site. A Mn(2+)-binding site is contributed by aspartate 221. Asparagine 278 serves as a coordination point for Mn(2+). Asparagine 278 provides a ligand contact to substrate. An N-linked (GlcNAc...) asparagine glycan is attached at asparagine 331. Residue histidine 360 coordinates Mn(2+). The active-site Proton donor is the histidine 370. Residue histidine 397 coordinates Mn(2+). A substrate-binding site is contributed by 397 to 399 (HVH). Histidine 399 contributes to the Fe cation binding site. N-linked (GlcNAc...) asparagine glycosylation is found at asparagine 409 and asparagine 455.

Belongs to the metallophosphoesterase superfamily. Purple acid phosphatase family. Homodimer. The cofactor is Fe cation. Mn(2+) is required as a cofactor. Specifically expressed in flowers.

The protein resides in the secreted. The catalysed reaction is a phosphate monoester + H2O = an alcohol + phosphate. Its function is as follows. Acid phosphatase activity with ATP, ADP, dATP, pyrophosphate, polyphosphate, phosphoserine and phosphothreonine. Low or no activity with phosphotyrosine, AMP and phytate. The sequence is that of Purple acid phosphatase 23 (PAP23) from Arabidopsis thaliana (Mouse-ear cress).